Here is a 955-residue protein sequence, read N- to C-terminus: MTTGLHEFNLASRRAEEAAARRFQAVQWLKSVVGQLGIPNQPSEKEFISCLRNGMILCNAINKIHPGAVSKVVENYSYLNGEYQLPPAYQYFENVRNFLVALETLRLPGFEASDLEKDNLESGSVTKVVDCILGLKAYHECKLPSNGNGLYKHVKTPTFQLSATKIHPTLSASKTSRHLDMSSVRERNDCTDGESDKLKGIAKLFADHIFSSKENIDENLVSLENGSENSRANFEKILSRFPELQSVFKNLLSEGTLKPSDLKSMPLEELPVHEEDQSSRSLSHKTKCNHKRLLKTQEKELAVLKNLFIKTKQDFKEFQVYLQRDLMELGNQMQEMSSAAQGYYKVVEENRKLYNMVQDLKGNIRVYCRVRPIFNSEMDGVIDYIGKDGSLFVLDPSKPYKDARKTFQFNQVFGPTATQDDVFRETQPLIRSVMDGYNVCIFAYGQTGSGKTYTMSGPPGRSATEMGINYLALSDLFLICDRRKDMMTYEIYVQMVEIYNEQVRDLLAENSSYIRTCSSDDDGLSLPDATMHSVNSTKDVLQLMEAGEVNRAVSSTSMNNRSSRSHSIFMVHVRGKDTSGGTLRSCLHLVDLAGSERVDKSEVTGDRLKEAQYINKSLSCLGDVISALAQKNSHIPYRNSKLTLLLQDSLGGQAKTLMFAHLSPEEDSFGETISTLKFAQRVSTVELGAARAHKETREVMHLKEQIENLKRALGTEEWNNVSNGSKEIKSPFSRPIATTERTPPRLRRLSIENCSSTKANLEDRRGIKSPLASRRAQILSLEGPMSCKNEENGKGDPTMEVHQLKNPRSPLSSYQNRAVKVDGRTSIPQLQLLQTPVKGASRNDIQMISVDSKTNGKGSHIRKSLRTIGKLINGSEKRKENIPADPRSPLGVANNFSHIKSPDTSNAKTMRRQSLTGVMPPGQERSRRSSIGGKPIENGKKDHVFTPFRLNKFNN.

One can recognise a Calponin-homology (CH) domain in the interval 19–140; sequence AARRFQAVQW…CILGLKAYHE (122 aa). Residues 363–685 enclose the Kinesin motor domain; that stretch reads NIRVYCRVRP…LKFAQRVSTV (323 aa). Position 445–452 (445–452) interacts with ATP; the sequence is GQTGSGKT. A coiled-coil region spans residues 692–719; that stretch reads AHKETREVMHLKEQIENLKRALGTEEWN. The tract at residues 878-942 is disordered; the sequence is RKENIPADPR…GKPIENGKKD (65 aa). A compositionally biased stretch (polar residues) spans 894–916; it reads NNFSHIKSPDTSNAKTMRRQSLT.

This sequence belongs to the TRAFAC class myosin-kinesin ATPase superfamily. Kinesin family. KIN-14 subfamily.

In Arabidopsis thaliana (Mouse-ear cress), this protein is Kinesin-like protein KIN-14L.